Here is a 338-residue protein sequence, read N- to C-terminus: Glycerol-3-phosphate dehydrogenase [NAD(P)+] (338 aa).

S12, W13, R33, and K110 together coordinate NADPH. Residues K110, G141, and S143 each contribute to the sn-glycerol 3-phosphate site. A145 lines the NADPH pocket. 5 residues coordinate sn-glycerol 3-phosphate: K196, D249, S259, R260, and N261. The active-site Proton acceptor is the K196. Position 260 (R260) interacts with NADPH. NADPH contacts are provided by V284 and E286.

The protein belongs to the NAD-dependent glycerol-3-phosphate dehydrogenase family.

The protein resides in the cytoplasm. It carries out the reaction sn-glycerol 3-phosphate + NAD(+) = dihydroxyacetone phosphate + NADH + H(+). The catalysed reaction is sn-glycerol 3-phosphate + NADP(+) = dihydroxyacetone phosphate + NADPH + H(+). It functions in the pathway membrane lipid metabolism; glycerophospholipid metabolism. In terms of biological role, catalyzes the reduction of the glycolytic intermediate dihydroxyacetone phosphate (DHAP) to sn-glycerol 3-phosphate (G3P), the key precursor for phospholipid synthesis. In Limosilactobacillus reuteri (strain DSM 20016) (Lactobacillus reuteri), this protein is Glycerol-3-phosphate dehydrogenase [NAD(P)+].